The chain runs to 1368 residues: DNA-directed RNA polymerase subunit beta (1368 aa).

It belongs to the RNA polymerase beta chain family. As to quaternary structure, the RNAP catalytic core consists of 2 alpha, 1 beta, 1 beta' and 1 omega subunit. When a sigma factor is associated with the core the holoenzyme is formed, which can initiate transcription.

The enzyme catalyses RNA(n) + a ribonucleoside 5'-triphosphate = RNA(n+1) + diphosphate. Its function is as follows. DNA-dependent RNA polymerase catalyzes the transcription of DNA into RNA using the four ribonucleoside triphosphates as substrates. The sequence is that of DNA-directed RNA polymerase subunit beta from Legionella pneumophila subsp. pneumophila (strain Philadelphia 1 / ATCC 33152 / DSM 7513).